A 306-amino-acid polypeptide reads, in one-letter code: Porphobilinogen deaminase (306 aa).

Cys239 bears the S-(dipyrrolylmethanemethyl)cysteine mark.

Belongs to the HMBS family. Monomer. The cofactor is dipyrromethane.

It catalyses the reaction 4 porphobilinogen + H2O = hydroxymethylbilane + 4 NH4(+). It participates in porphyrin-containing compound metabolism; protoporphyrin-IX biosynthesis; coproporphyrinogen-III from 5-aminolevulinate: step 2/4. Tetrapolymerization of the monopyrrole PBG into the hydroxymethylbilane pre-uroporphyrinogen in several discrete steps. The chain is Porphobilinogen deaminase from Helicobacter pylori (strain Shi470).